A 1104-amino-acid polypeptide reads, in one-letter code: General transcription factor II-I repeat domain-containing protein 1 (1104 aa).

Residues Lys27, Lys184, Lys212, Lys225, Lys238, Lys271, Lys337, Lys436, Lys439, and Lys443 each participate in a glycyl lysine isopeptide (Lys-Gly) (interchain with G-Cter in SUMO2) cross-link. Residues 119-213 form a GTF2I-like 1 repeat; that stretch reads LEQCSDVYLL…PDDGGQDTKA (95 aa). Residues 342–436 form a GTF2I-like 2 repeat; that stretch reads IKEMEDINTL…FDERIFTGNK (95 aa). At Ser448 the chain carries Phosphoserine. The interval 509–559 is disordered; sequence SDPSPTSEEMTDSLPGHLPSEDSGYGMEMPADKGPSEEPWSEERPAEESPG. Over residues 538–555 the composition is skewed to basic and acidic residues; sequence PADKGPSEEPWSEERPAE. Residues 556–650 form a GTF2I-like 3 repeat; that stretch reads ESPGDVIRPL…ELLTDGVKEP (95 aa). Residues Lys567, Lys579, Lys588, Lys622, Lys638, Lys669, Lys709, Lys717, Lys757, Lys759, and Lys772 each participate in a glycyl lysine isopeptide (Lys-Gly) (interchain with G-Cter in SUMO2) cross-link. A GTF2I-like 4 repeat occupies 681 to 775; it reads LSRIDIANTL…FQGLIPKPET (95 aa). Positions 783-802 are disordered; that stretch reads EAGKTTRPRRLQQDTWQPDE. One copy of the GTF2I-like 5 repeat lies at 805 to 899; that stretch reads ANRLGEKVIL…LQPFAEVCND (95 aa). Residues Lys841 and Lys901 each participate in a glycyl lysine isopeptide (Lys-Gly) (interchain with G-Cter in SUMO2) cross-link. The GTF2I-like 6 repeat unit spans residues 908–1002; the sequence is SNKLGKKVIL…LQPFGDVCNN (95 aa). Disordered stretches follow at residues 1001-1044 and 1058-1104; these read NNAK…VAST and LHPN…LPTR. A Nuclear localization signal motif is present at residues 1012–1019; the sequence is PKRKRKRV. The segment covering 1021–1043 has biased composition (low complexity); sequence EGNSVSSSSSSSSSSSNPESVAS.

This sequence belongs to the TFII-I family. As to quaternary structure, interacts with the retinoblastoma protein (RB1) via its C-terminus. As to expression, widely expressed.

Its subcellular location is the nucleus. In terms of biological role, may be a transcription regulator involved in cell-cycle progression and skeletal muscle differentiation. May repress GTF2I transcriptional functions, by preventing its nuclear residency, or by inhibiting its transcriptional activation. May contribute to slow-twitch fiber type specificity during myogenesis and in regenerating muscles. Binds troponin I slow-muscle fiber enhancer (USE B1). Binds specifically and with high affinity to the EFG sequences derived from the early enhancer of HOXC8. This is General transcription factor II-I repeat domain-containing protein 1 (Gtf2ird1) from Mus musculus (Mouse).